A 304-amino-acid chain; its full sequence is tRNA dimethylallyltransferase (304 aa).

Position 10-17 (10-17 (GPTASGKS)) interacts with ATP. Position 12-17 (12-17 (TASGKS)) interacts with substrate. Residues 35-38 (DSRQ) are interaction with substrate tRNA.

It belongs to the IPP transferase family. In terms of assembly, monomer. It depends on Mg(2+) as a cofactor.

It carries out the reaction adenosine(37) in tRNA + dimethylallyl diphosphate = N(6)-dimethylallyladenosine(37) in tRNA + diphosphate. In terms of biological role, catalyzes the transfer of a dimethylallyl group onto the adenine at position 37 in tRNAs that read codons beginning with uridine, leading to the formation of N6-(dimethylallyl)adenosine (i(6)A). The polypeptide is tRNA dimethylallyltransferase (Gloeothece citriformis (strain PCC 7424) (Cyanothece sp. (strain PCC 7424))).